The chain runs to 760 residues: Prolyl endopeptidase (760 aa).

Active-site charge relay system residues include Ser609, Asp693, and His730.

Belongs to the peptidase S9A family.

It localises to the cytoplasm. The enzyme catalyses Hydrolysis of Pro-|-Xaa &gt;&gt; Ala-|-Xaa in oligopeptides.. Inhibited by chymostatin, Boc-Glu(NHO-Bz)-Pyrrolidide, Z-Pro-L-prolinal dimethyacetal and the peptide H-H-L-P-P-P-V-OH. Its function is as follows. Cleaves peptide bonds on the C-terminal side of prolyl residues within peptides that are up to approximately 30 amino acids long. The polypeptide is Prolyl endopeptidase (prep) (Dictyostelium discoideum (Social amoeba)).